The chain runs to 403 residues: MGKVWKQQMYPQYATYYYPQYLQAKQSLVPAHPMAPPSPSTTSSNNNSSSSSNSGWDQLSKTNLYIRGLPPNTTDQDLVKLCQPYGKIVSTKAILDKATNKCKGYGFVDFDSPAAAQKAVSALKANGVQAQMAKQQEQDPTNLYISNLPLSMDEQELENMLKPFGQVISTRVLRDSSGASRGVGFARMESTEKCEAVIGHFNGKFIKTPPGVSAPTEPLLCKFADGGQKKRQNPNKYIPNGRPWPRDGEAGMTLTYDPTTAALHNGFYPSPYSIATNRMITQTSLTPYIASPVSAYQVQSPSWMQPQPYILQHPGAVLTPSMEHTMSLQPASMISPLAQQMSHLSLGSTGTYMPATSAMQGAYLPQYTHMQTAAVPVEEASGQQQVAVETSNDHSPYTFPPNK.

The tract at residues 30–56 is disordered; sequence PAHPMAPPSPSTTSSNNNSSSSSNSGW. A compositionally biased stretch (low complexity) spans 40–54; the sequence is STTSSNNNSSSSSNS. 2 consecutive RRM domains span residues 62–135 and 141–226; these read TNLY…MAKQ and TNLY…FADG. Thr208 bears the Phosphothreonine mark. Residues 382–395 are compositionally biased toward polar residues; that stretch reads GQQQVAVETSNDHS. Positions 382–403 are disordered; it reads GQQQVAVETSNDHSPYTFPPNK.

In terms of tissue distribution, ubiquitous. Expressed in all tissues except testis.

The protein localises to the nucleus. Single-stranded DNA binding protein that interacts with the region upstream of the MYC gene. Binds specifically to the DNA sequence motif 5'-[AT]CT[AT][AT]T-3'. Probably has a role in DNA replication. The polypeptide is RNA-binding motif, single-stranded-interacting protein 1 (Rbms1) (Mus musculus (Mouse)).